Here is a 356-residue protein sequence, read N- to C-terminus: 3,4-dihydroxy-2-butanone 4-phosphate synthase (356 aa).

The tract at residues 1–211 (MNAILSDQKT…ISDIVEYRMM (211 aa)) is DHBP synthase. Residues 38 to 39 (RE), aspartate 43, 150 to 154 (RIGHT), and glutamate 174 each bind D-ribulose 5-phosphate. Glutamate 39 lines the Mg(2+) pocket. A Mg(2+)-binding site is contributed by histidine 153. Residues 212–356 (NESLIRVIAE…KSTNVNETVA (145 aa)) form a GTP cyclohydrolase II-like region.

The protein in the N-terminal section; belongs to the DHBP synthase family. In the C-terminal section; belongs to the GTP cyclohydrolase II family. Mg(2+) is required as a cofactor. The cofactor is Mn(2+).

It carries out the reaction D-ribulose 5-phosphate = (2S)-2-hydroxy-3-oxobutyl phosphate + formate + H(+). It functions in the pathway cofactor biosynthesis; riboflavin biosynthesis; 2-hydroxy-3-oxobutyl phosphate from D-ribulose 5-phosphate: step 1/1. Its function is as follows. Catalyzes the conversion of D-ribulose 5-phosphate to formate and 3,4-dihydroxy-2-butanone 4-phosphate. The polypeptide is 3,4-dihydroxy-2-butanone 4-phosphate synthase (ribB) (Sulfurospirillum multivorans (Dehalospirillum multivorans)).